Reading from the N-terminus, the 40-residue chain is Large ribosomal subunit protein bL36 (40 aa).

This sequence belongs to the bacterial ribosomal protein bL36 family.

This is Large ribosomal subunit protein bL36 from Corynebacterium kroppenstedtii (strain DSM 44385 / JCM 11950 / CIP 105744 / CCUG 35717).